The chain runs to 356 residues: Chaperone protein DnaJ (356 aa).

In terms of domain architecture, J spans 5-69 (DYYQILGVSK…ERRKEYDRIL (65 aa)). Residues 121 to 197 (GCEKDIEYER…CSGRGRVAMH (77 aa)) form a CR-type zinc finger. The Zn(2+) site is built by cysteine 134, cysteine 137, cysteine 151, cysteine 154, cysteine 171, cysteine 174, cysteine 185, and cysteine 188. CXXCXGXG motif repeat units lie at residues 134-141 (CPTCEGKG), 151-158 (CHACEGTG), 171-178 (CSVCKGRG), and 185-192 (CPACSGRG).

It belongs to the DnaJ family. Homodimer. The cofactor is Zn(2+).

It is found in the cytoplasm. Functionally, participates actively in the response to hyperosmotic and heat shock by preventing the aggregation of stress-denatured proteins and by disaggregating proteins, also in an autonomous, DnaK-independent fashion. Unfolded proteins bind initially to DnaJ; upon interaction with the DnaJ-bound protein, DnaK hydrolyzes its bound ATP, resulting in the formation of a stable complex. GrpE releases ADP from DnaK; ATP binding to DnaK triggers the release of the substrate protein, thus completing the reaction cycle. Several rounds of ATP-dependent interactions between DnaJ, DnaK and GrpE are required for fully efficient folding. Also involved, together with DnaK and GrpE, in the DNA replication of plasmids through activation of initiation proteins. In Hydrogenobacter thermophilus (strain DSM 6534 / IAM 12695 / TK-6), this protein is Chaperone protein DnaJ.